The sequence spans 143 residues: ATP synthase F(0) complex subunit C2, mitochondrial (143 aa).

Residues 1–68 (MYTCAKFVST…RSFQTSAISR (68 aa)) constitute a mitochondrion transit peptide. The chain crosses the membrane as a helical span at residues 84–104 (VGVAGSGAGIGTVFGSLIIGY). Residue K111 is modified to N6,N6,N6-trimethyllysine. Residues 119 to 139 (ILGFALSEAMGLFCLMVAFLI) form a helical membrane-spanning segment.

The protein belongs to the ATPase C chain family. As to quaternary structure, F-type ATPases have 2 components, CF(1) - the catalytic core - and CF(0) - the membrane proton channel. CF(1) has five subunits: alpha(3), beta(3), gamma(1), delta(1), epsilon(1). CF(0) has three main subunits: a, b and c. Interacts with DNAJC30; interaction is direct. In terms of processing, trimethylated by ATPSCKMT at Lys-111. Methylation is required for proper incorporation of the C subunit into the ATP synthase complex and mitochondrial respiration.

It is found in the mitochondrion membrane. Mitochondrial membrane ATP synthase (F(1)F(0) ATP synthase or Complex V) produces ATP from ADP in the presence of a proton gradient across the membrane which is generated by electron transport complexes of the respiratory chain. F-type ATPases consist of two structural domains, F(1) - containing the extramembraneous catalytic core and F(0) - containing the membrane proton channel, linked together by a central stalk and a peripheral stalk. During catalysis, ATP synthesis in the catalytic domain of F(1) is coupled via a rotary mechanism of the central stalk subunits to proton translocation. Part of the complex F(0) domain. A homomeric c-ring of probably 10 subunits is part of the complex rotary element. This Ovis aries (Sheep) protein is ATP synthase F(0) complex subunit C2, mitochondrial.